The primary structure comprises 311 residues: Homoserine kinase (311 aa).

88 to 98 (PEGLGLGSSGA) lines the ATP pocket.

Belongs to the GHMP kinase family. Homoserine kinase subfamily.

The protein resides in the cytoplasm. The enzyme catalyses L-homoserine + ATP = O-phospho-L-homoserine + ADP + H(+). It functions in the pathway amino-acid biosynthesis; L-threonine biosynthesis; L-threonine from L-aspartate: step 4/5. Catalyzes the ATP-dependent phosphorylation of L-homoserine to L-homoserine phosphate. This Saccharolobus solfataricus (strain ATCC 35092 / DSM 1617 / JCM 11322 / P2) (Sulfolobus solfataricus) protein is Homoserine kinase.